We begin with the raw amino-acid sequence, 417 residues long: Interferon-gamma-inducible GTPase 10 (417 aa).

G2 is lipidated: N-myristoyl glycine. Residues 67 to 249 form the IRG-type G domain; it reads APLNIAVTGE…PSLESTLLEE (183 aa). Residues G78, A79, S82, T83, S101, K183, D185, and S231 each contribute to the GDP site. 2 helical membrane passes run 284 to 302 and 370 to 387; these read EALK…FFND and AVTG…KSYY.

This sequence belongs to the TRAFAC class dynamin-like GTPase superfamily. GB1/RHD3 GTPase family. GB1 subfamily. In terms of assembly, homooligomer; homooligomerization occurs upon GTP-binding and is required for the association with membranous structures. Homodimer; GDP-binding induces formation of an inactive head-to-head homodimer. Post-translationally, myristoylation is required for localization to pathogen-containing vacuoles. (Microbial infection) Phosphorylated by Toxoplasma gondii ROP18.

The protein localises to the membrane. Its subcellular location is the cytoplasmic vesicle membrane. It carries out the reaction GTP + H2O = GDP + phosphate + H(+). In terms of biological role, interferon (IFN)-inducible GTPase that plays important roles in innate immunity against a diverse range of bacterial, viral and protozoan pathogens by mediating cytosolic release of pathogenic ligands that activate the inflammasomes. Following infection, recruited to the membrane of pathogens in a GBP-dependent manner and mediates disruption of the pathogen membrane, liberating ligands that are detected by inflammasomes, such as lipopolysaccharide (LPS) that activates the non-canonical CASP4/CASP11 inflammasome or double-stranded DNA (dsDNA) that activates the AIM2 inflammasome. Promotes AIM2 and NLRP3 inflammasome activation following A.fumigatus infection by liberating beta-glucan, which directly triggers inflammasome assembly. Promotes NLRP3 inflammasome activation following influenza A virus infection. The sequence is that of Interferon-gamma-inducible GTPase 10 from Mus musculus (Mouse).